The primary structure comprises 79 residues: D-alanyl carrier protein (79 aa).

Positions 2–79 constitute a Carrier domain; sequence AEFKEQVLDI…MVIKKLEEIR (78 aa). S37 is subject to O-(pantetheine 4'-phosphoryl)serine.

Belongs to the DltC family. 4'-phosphopantetheine is transferred from CoA to a specific serine of apo-DCP.

It is found in the cytoplasm. It participates in cell wall biogenesis; lipoteichoic acid biosynthesis. Its function is as follows. Carrier protein involved in the D-alanylation of lipoteichoic acid (LTA). The loading of thioester-linked D-alanine onto DltC is catalyzed by D-alanine--D-alanyl carrier protein ligase DltA. The DltC-carried D-alanyl group is further transferred to cell membrane phosphatidylglycerol (PG) by forming an ester bond, probably catalyzed by DltD. D-alanylation of LTA plays an important role in modulating the properties of the cell wall in Gram-positive bacteria, influencing the net charge of the cell wall. In Bacillus anthracis (strain CDC 684 / NRRL 3495), this protein is D-alanyl carrier protein.